A 356-amino-acid polypeptide reads, in one-letter code: Glutamine synthetase nodule isozyme (356 aa).

A GS beta-grasp domain is found at 19–99 (IIAEYIWVGG…VICDVYTPAG (81 aa)). The 251-residue stretch at 106-356 (KRHNAAKIFS…IAETTLLWKP (251 aa)) folds into the GS catalytic domain.

Belongs to the glutamine synthetase family. As to quaternary structure, homooctamer. In terms of tissue distribution, found at highest levels in root nodules.

It is found in the cytoplasm. It catalyses the reaction L-glutamate + NH4(+) + ATP = L-glutamine + ADP + phosphate + H(+). In Medicago sativa (Alfalfa), this protein is Glutamine synthetase nodule isozyme (GS1).